We begin with the raw amino-acid sequence, 468 residues long: Methionine aminopeptidase 2 (468 aa).

The span at 63–74 (AAKEATKKDAKG) shows a compositional bias: basic and acidic residues. The tract at residues 63-87 (AAKEATKKDAKGGKGKANGSAAATA) is disordered. H219 serves as a coordination point for substrate. 3 residues coordinate a divalent metal cation: D239, D250, and H319. H327 is a binding site for substrate. A divalent metal cation contacts are provided by E352 and E449.

Belongs to the peptidase M24A family. Methionine aminopeptidase eukaryotic type 2 subfamily. It depends on Co(2+) as a cofactor. Zn(2+) serves as cofactor. Mn(2+) is required as a cofactor. The cofactor is Fe(2+).

The protein resides in the cytoplasm. The catalysed reaction is Release of N-terminal amino acids, preferentially methionine, from peptides and arylamides.. Its activity is regulated as follows. Inhibited by the fumagillin analog, TNP-470. Functionally, cotranslationally removes the N-terminal methionine from nascent proteins. The N-terminal methionine is often cleaved when the second residue in the primary sequence is small and uncharged (Met-Ala-, Cys, Gly, Pro, Ser, Thr, or Val). Required for germ cell proliferation and/or differentiation. This is Methionine aminopeptidase 2 from Caenorhabditis elegans.